The primary structure comprises 105 residues: Nucleoid-associated protein lin2851 (105 aa).

Low complexity predominate over residues 1 to 16 (MRGMGNMQGMMKQMQK). Positions 1–23 (MRGMGNMQGMMKQMQKMQKEMAK) are disordered.

It belongs to the YbaB/EbfC family. In terms of assembly, homodimer.

It is found in the cytoplasm. The protein localises to the nucleoid. Its function is as follows. Binds to DNA and alters its conformation. May be involved in regulation of gene expression, nucleoid organization and DNA protection. This is Nucleoid-associated protein lin2851 from Listeria innocua serovar 6a (strain ATCC BAA-680 / CLIP 11262).